Reading from the N-terminus, the 69-residue chain is A-kinase anchor protein inhibitor 1 (69 aa).

The segment at 39 to 69 (QESLRREGRPGDSRAWGQLGGCELTKKHEKK) is disordered. Positions 41 to 50 (SLRREGRPGD) are enriched in basic and acidic residues.

As to quaternary structure, binds cAMP-dependent protein kinase (PKA). Interacts specifically with RII-regulatory subunits of PKA (PRKAR2A and PRKAR2B). In terms of tissue distribution, preferentially expressed in the neural tissues.

Functionally, protein kinase A (PKA)-binding protein. Binds to type II regulatory subunits of protein kinase A (PKA) and may block the A-kinase anchoring protein (AKAP)-mediated subcellular localization of PKA. This is A-kinase anchor protein inhibitor 1 from Mus musculus (Mouse).